The chain runs to 934 residues: Bifunctional uridylyltransferase/uridylyl-removing enzyme (934 aa).

Residues 1–379 (MSAHDLKLEE…TFSRRKRKLS (379 aa)) are uridylyltransferase. Residues 380 to 736 (ADGDFVSENH…AKPHTFEAVT (357 aa)) are uridylyl-removing. Positions 496-613 (VDEHLLRCIA…IDFADTVQTM (118 aa)) constitute an HD domain. ACT domains lie at 737–819 (EITV…VLAK) and 848–931 (VIEV…RSSQ).

It belongs to the GlnD family. Mg(2+) serves as cofactor.

The catalysed reaction is [protein-PII]-L-tyrosine + UTP = [protein-PII]-uridylyl-L-tyrosine + diphosphate. It catalyses the reaction [protein-PII]-uridylyl-L-tyrosine + H2O = [protein-PII]-L-tyrosine + UMP + H(+). Its activity is regulated as follows. Uridylyltransferase (UTase) activity is inhibited by glutamine, while glutamine activates uridylyl-removing (UR) activity. Functionally, modifies, by uridylylation and deuridylylation, the PII regulatory proteins (GlnB and homologs), in response to the nitrogen status of the cell that GlnD senses through the glutamine level. Under low glutamine levels, catalyzes the conversion of the PII proteins and UTP to PII-UMP and PPi, while under higher glutamine levels, GlnD hydrolyzes PII-UMP to PII and UMP (deuridylylation). Thus, controls uridylylation state and activity of the PII proteins, and plays an important role in the regulation of nitrogen assimilation and metabolism. This chain is Bifunctional uridylyltransferase/uridylyl-removing enzyme, found in Brucella anthropi (strain ATCC 49188 / DSM 6882 / CCUG 24695 / JCM 21032 / LMG 3331 / NBRC 15819 / NCTC 12168 / Alc 37) (Ochrobactrum anthropi).